Consider the following 711-residue polypeptide: Polyribonucleotide nucleotidyltransferase (711 aa).

2 residues coordinate Mg(2+): aspartate 486 and aspartate 492. The 60-residue stretch at 553-612 folds into the KH domain; that stretch reads PRIHTIKINPDKIKDVIGKGGSVIRALTEETGTTIEIEDDGTVKIAATDGEKAKNAIRRI. Residues 622 to 690 form the S1 motif domain; it reads GRVYNGKVTR…RQGRIRLSIK (69 aa). Residues 689 to 711 form a disordered region; sequence IKEATEQSQPAAAPEAPAAEQGE. Low complexity predominate over residues 694-711; sequence EQSQPAAAPEAPAAEQGE.

The protein belongs to the polyribonucleotide nucleotidyltransferase family. In terms of assembly, component of the RNA degradosome, which is a multiprotein complex involved in RNA processing and mRNA degradation. Mg(2+) is required as a cofactor.

Its subcellular location is the cytoplasm. The enzyme catalyses RNA(n+1) + phosphate = RNA(n) + a ribonucleoside 5'-diphosphate. Its function is as follows. Involved in mRNA degradation. Catalyzes the phosphorolysis of single-stranded polyribonucleotides processively in the 3'- to 5'-direction. This is Polyribonucleotide nucleotidyltransferase from Escherichia fergusonii (strain ATCC 35469 / DSM 13698 / CCUG 18766 / IAM 14443 / JCM 21226 / LMG 7866 / NBRC 102419 / NCTC 12128 / CDC 0568-73).